Consider the following 262-residue polypeptide: Ribose-5-phosphate isomerase A (262 aa).

Substrate contacts are provided by residues 33-36, 89-92, and 102-105; these read TGST, DGAD, and KGGG. Catalysis depends on Glu111, which acts as the Proton acceptor. Residue Lys129 coordinates substrate.

This sequence belongs to the ribose 5-phosphate isomerase family. Homodimer.

It carries out the reaction aldehydo-D-ribose 5-phosphate = D-ribulose 5-phosphate. It participates in carbohydrate degradation; pentose phosphate pathway; D-ribose 5-phosphate from D-ribulose 5-phosphate (non-oxidative stage): step 1/1. In terms of biological role, catalyzes the reversible conversion of ribose-5-phosphate to ribulose 5-phosphate. The chain is Ribose-5-phosphate isomerase A from Cereibacter sphaeroides (strain KD131 / KCTC 12085) (Rhodobacter sphaeroides).